The following is a 485-amino-acid chain: Elongation factor TuB, chloroplastic (485 aa).

The N-terminal 76 residues, 1-76 (MASISAASAT…TTHPRRFTVR (76 aa)), are a transit peptide targeting the chloroplast. Residues 86–290 (KPHVNIGTIG…NVDEYIPIPQ (205 aa)) enclose the tr-type G domain. Residues 95 to 102 (GHVDHGKT) are G1. Position 95–102 (95–102 (GHVDHGKT)) interacts with GTP. The G2 stretch occupies residues 136–140 (GITIN). The segment at 157 to 160 (DCPG) is G3. GTP is bound by residues 157–161 (DCPGH) and 212–215 (NKQD). Residues 212 to 215 (NKQD) are G4. The G5 stretch occupies residues 250 to 252 (SAL).

Belongs to the TRAFAC class translation factor GTPase superfamily. Classic translation factor GTPase family. EF-Tu/EF-1A subfamily.

It is found in the plastid. The protein localises to the chloroplast. Functionally, this protein promotes the GTP-dependent binding of aminoacyl-tRNA to the A-site of ribosomes during protein biosynthesis. The sequence is that of Elongation factor TuB, chloroplastic (TUFB) from Nicotiana sylvestris (Wood tobacco).